The primary structure comprises 330 residues: 2-phospho-L-lactate transferase (330 aa).

Position 49 (aspartate 49) interacts with 7,8-didemethyl-8-hydroxy-5-deazariboflavin.

Belongs to the CofD family. Homodimer. It depends on Mg(2+) as a cofactor.

The catalysed reaction is (2S)-lactyl-2-diphospho-5'-guanosine + 7,8-didemethyl-8-hydroxy-5-deazariboflavin = oxidized coenzyme F420-0 + GMP + H(+). The protein operates within cofactor biosynthesis; coenzyme F420 biosynthesis. In terms of biological role, catalyzes the transfer of the 2-phospholactate moiety from (2S)-lactyl-2-diphospho-5'-guanosine to 7,8-didemethyl-8-hydroxy-5-deazariboflavin (FO) with the formation of oxidized coenzyme F420-0 and GMP. This is 2-phospho-L-lactate transferase from Haloarcula marismortui (strain ATCC 43049 / DSM 3752 / JCM 8966 / VKM B-1809) (Halobacterium marismortui).